The primary structure comprises 229 residues: Large ribosomal subunit protein uL1 (229 aa).

This sequence belongs to the universal ribosomal protein uL1 family. Part of the 50S ribosomal subunit.

Its function is as follows. Binds directly to 23S rRNA. The L1 stalk is quite mobile in the ribosome, and is involved in E site tRNA release. Protein L1 is also a translational repressor protein, it controls the translation of the L11 operon by binding to its mRNA. In Streptococcus equi subsp. equi (strain 4047), this protein is Large ribosomal subunit protein uL1.